The sequence spans 303 residues: Cell wall mannoprotein HSP150 (303 aa).

The N-terminal stretch at 1–18 (MQYKKTLVASALAATTLA) is a signal peptide. A propeptide spanning residues 19 to 72 (AYAPSEPWSTLTPTATYSGGVTDYASTFGIAVQPISTTSSASSAATTASSKAKR) is cleaved from the precursor. PIR1/2/3 repeat units follow at residues 71–89 (KRAA…TTTA) and 97–113 (AAAV…ATTK). The stretch at 114–134 (TTAAASLKLVMVKIQATTKTT) is one PIR1/2/3 3; degenerate repeat. PIR1/2/3 repeat units follow at residues 135-153 (AAAV…TKTT), 154-171 (AAAV…TTKT), and 172-190 (TQAA…SATS).

It belongs to the PIR protein family. Covalently linked to beta-1,3-glucan of the inner cell wall layer via an alkali-sensitive ester linkage between the gamma-carboxyl group of glutamic acids, arising from specific glutamines within the PIR1/2/3 repeats, and hydroxyl groups of glucoses of beta-1,3-glucan chains. In terms of processing, the propeptide is cleaved off in the late Golgi. While both peptides are secreted, only a fraction of the mature glycoprotein is incorporated into the cell wall. Post-translationally, O-glycosylated. Extensively O-mannosylated.

It is found in the secreted. The protein localises to the cell wall. Its function is as follows. Component of the outer cell wall layer. Required for stability of the cell wall and for optimal growth. Required for resistance against several antifungal and cell wall-perturbing agents and for tolerance to heat shock. The protein is Cell wall mannoprotein HSP150 (HSP150) of Saccharomyces cerevisiae (strain AWRI1631) (Baker's yeast).